A 542-amino-acid chain; its full sequence is Chaperonin GroEL (542 aa).

Residues 29 to 32 (TLGP), 86 to 90 (DGTTT), Gly-413, 478 to 480 (DAL), and Asp-494 contribute to the ATP site.

This sequence belongs to the chaperonin (HSP60) family. In terms of assembly, forms a cylinder of 14 subunits composed of two heptameric rings stacked back-to-back. Interacts with the co-chaperonin GroES.

It is found in the cytoplasm. It carries out the reaction ATP + H2O + a folded polypeptide = ADP + phosphate + an unfolded polypeptide.. Together with its co-chaperonin GroES, plays an essential role in assisting protein folding. The GroEL-GroES system forms a nano-cage that allows encapsulation of the non-native substrate proteins and provides a physical environment optimized to promote and accelerate protein folding. This chain is Chaperonin GroEL, found in Clostridioides difficile (strain 630) (Peptoclostridium difficile).